The primary structure comprises 314 residues: Periplasmic [NiFe] hydrogenase small subunit (314 aa).

The tat-type signal signal peptide spans 1 to 49 (MNFSVGLGRDDAEKRLVQNGVSRRDFMKFCATVAAAMGMGPAFAPKVAE). Residues Cys-67, Cys-70, Cys-164, Cys-197, His-234, Cys-237, Cys-262, and Cys-268 each coordinate [4Fe-4S] cluster. 3 residues coordinate [3Fe-4S] cluster: Cys-277, Cys-295, and Cys-298.

Belongs to the [NiFe]/[NiFeSe] hydrogenase small subunit family. As to quaternary structure, heterodimer of a large and a small subunit. It depends on [4Fe-4S] cluster as a cofactor. Requires [3Fe-4S] cluster as cofactor. In terms of processing, predicted to be exported by the Tat system. The position of the signal peptide cleavage has been experimentally proven.

The protein localises to the periplasm. It carries out the reaction 2 Fe(III)-[cytochrome c3] + H2 = 2 Fe(II)-[cytochrome c3] + 2 H(+). In terms of biological role, involved in hydrogen uptake for the anaerobic reduction of sulfate to hydrogen sulfide in an electron transport chain. Cytochrome c3 is the physiological electron acceptor. The sequence is that of Periplasmic [NiFe] hydrogenase small subunit (hydA) from Solidesulfovibrio fructosivorans (Desulfovibrio fructosivorans).